We begin with the raw amino-acid sequence, 236 residues long: Purine nucleoside phosphorylase DeoD-type (236 aa).

Residue His-5 coordinates a purine D-ribonucleoside. Phosphate is bound by residues Gly-21, Arg-25, Arg-44, and Arg-88–Thr-91. A purine D-ribonucleoside contacts are provided by residues Glu-180 to Glu-182 and Ser-204 to Asp-205. The active-site Proton donor is Asp-205.

This sequence belongs to the PNP/UDP phosphorylase family. In terms of assembly, homohexamer; trimer of homodimers.

The catalysed reaction is a purine D-ribonucleoside + phosphate = a purine nucleobase + alpha-D-ribose 1-phosphate. It carries out the reaction a purine 2'-deoxy-D-ribonucleoside + phosphate = a purine nucleobase + 2-deoxy-alpha-D-ribose 1-phosphate. Catalyzes the reversible phosphorolytic breakdown of the N-glycosidic bond in the beta-(deoxy)ribonucleoside molecules, with the formation of the corresponding free purine bases and pentose-1-phosphate. This Shewanella loihica (strain ATCC BAA-1088 / PV-4) protein is Purine nucleoside phosphorylase DeoD-type.